We begin with the raw amino-acid sequence, 372 residues long: MAFKQLFAAISLALSLSAANAAAVIEKRATCSNGKTVGDASSCAWFDVLDDIQQNLFHGGQCGAEAHESIRLVFHDSIAISPAMEAQGKFGGGGADGSIMIFDDIETAFHPNIGLDEIVKLQKPFVQKHGCTPGDFIAFAGAVALSNCPGAPQMNFFTGRAPATQAAPDGLVPEPFHTVDQIINRVNDAGEFDELELVWMLSAHSVAAVNDVDPTVQGLPFDSTPGIFDSQFFVETQLRGTAFPGSGGNQGEVESPLPGEIRIQSDHTIARDSRTACEWQSFVNNQSKLVDDFQFIFLALTQLGQDPNAMTDCSDVIPQSKPIPGNLPFSFFPAGKTIKDVEQACAETPFPTLTTLPGPETSVQRIPPPPGA.

An N-terminal signal peptide occupies residues 1-21 (MAFKQLFAAISLALSLSAANA). A propeptide spanning residues 22-28 (AAVIEKR) is cleaved from the precursor. Disulfide bonds link C31/C43 and C62/C148. Catalysis depends on H75, which acts as the Proton acceptor. Ca(2+)-binding residues include D76, G94, D96, and S98. H204 serves as a coordination point for heme b. 5 residues coordinate Ca(2+): S205, D222, T224, I227, and D229. The cysteines at positions 277 and 345 are disulfide-linked. N-linked (GlcNAc...) asparagine glycosylation is present at N285. Residues 350–361 (FPTLTTLPGPET) show a composition bias toward low complexity. Residues 350–372 (FPTLTTLPGPETSVQRIPPPPGA) form a disordered region.

It belongs to the peroxidase family. Ligninase subfamily. Heme b is required as a cofactor. It depends on Ca(2+) as a cofactor.

The catalysed reaction is 1-(3,4-dimethoxyphenyl)-2-(2-methoxyphenoxy)propane-1,3-diol + H2O2 = 3,4-dimethoxybenzaldehyde + guaiacol + glycolaldehyde + H2O. The enzyme catalyses 2 (3,4-dimethoxyphenyl)methanol + H2O2 = 2 (3,4-dimethoxyphenyl)methanol radical + 2 H2O. It functions in the pathway secondary metabolite metabolism; lignin degradation. Its function is as follows. Depolymerization of lignin. Catalyzes the C(alpha)-C(beta) cleavage of the propyl side chains of lignin. The chain is Ligninase LG3 (GLG3) from Phanerodontia chrysosporium (White-rot fungus).